The sequence spans 380 residues: Cytochrome b (380 aa).

A run of 4 helical transmembrane segments spans residues 34–54, 78–99, 114–134, and 179–199; these read FGSLLAVCLMTQILTGLLLAM, WLIRNLHANGASFFFICIFLHI, WNTGVILLLTLMATAFVGYVL, and FFALHFLLPFAIAGITVVHLT. The heme b site is built by His84 and His98. Heme b-binding residues include His183 and His197. His202 contributes to the a ubiquinone binding site. 4 helical membrane-spanning segments follow: residues 227-247, 289-309, 321-341, and 348-368; these read LKDILGLTLMLTPFLTLALFS, LGGVLALAASVLILFLIPFLH, LSQTLFWLLVANLLILTWIGS, and FMIIGQMASLSYFTILLILFP.

This sequence belongs to the cytochrome b family. As to quaternary structure, the cytochrome bc1 complex contains 11 subunits: 3 respiratory subunits (MT-CYB, CYC1 and UQCRFS1), 2 core proteins (UQCRC1 and UQCRC2) and 6 low-molecular weight proteins (UQCRH/QCR6, UQCRB/QCR7, UQCRQ/QCR8, UQCR10/QCR9, UQCR11/QCR10 and a cleavage product of UQCRFS1). This cytochrome bc1 complex then forms a dimer. Heme b serves as cofactor.

Its subcellular location is the mitochondrion inner membrane. Its function is as follows. Component of the ubiquinol-cytochrome c reductase complex (complex III or cytochrome b-c1 complex) that is part of the mitochondrial respiratory chain. The b-c1 complex mediates electron transfer from ubiquinol to cytochrome c. Contributes to the generation of a proton gradient across the mitochondrial membrane that is then used for ATP synthesis. This is Cytochrome b (MT-CYB) from Gallus lafayettii (Sri Lanka junglefowl).